The sequence spans 420 residues: MDKFRVQGRTRLSGEVTISGAKNAALPILFAALLAEEPVELQNVPKLKDIDTTIKLLSQLGTKIERNNGSVFVDASAVNEFCAPYDLVKTMRASIWALGPLVARFGQGQVSLPGGCAIGARPVDLHITGLEQLGAEIKLEEGYVKASVNGRLKGAHIVMDKVSVGATVTIMSAATLAEGTTVIENAAREPEIVDTANFLNTLGAKISGAGTDRITIEGVTRLGGGVYRVLPDRIETGTFLVAAAISGGKVVCRQTRPDTLDAVLAKLREAGADIEVGDDWISLDMQGKRPKAITFRTAPHPGFPTDMQAQFSLLNLVAEGTGVITETIFENRFMHVPELIRMGAHAEIESNTVICYGVEQLSGAQVMATDLRASASLVLAGCIAEGVTIVDRIYHIDRGYERIEDKLRALGAKIERVKGE.

Residue 22–23 (KN) coordinates phosphoenolpyruvate. R92 serves as a coordination point for UDP-N-acetyl-alpha-D-glucosamine. The active-site Proton donor is C116. C116 bears the 2-(S-cysteinyl)pyruvic acid O-phosphothioketal mark. UDP-N-acetyl-alpha-D-glucosamine is bound by residues 121-125 (RPVDL), 161-164 (KVSV), D306, and I328.

This sequence belongs to the EPSP synthase family. MurA subfamily.

The protein resides in the cytoplasm. It catalyses the reaction phosphoenolpyruvate + UDP-N-acetyl-alpha-D-glucosamine = UDP-N-acetyl-3-O-(1-carboxyvinyl)-alpha-D-glucosamine + phosphate. Its pathway is cell wall biogenesis; peptidoglycan biosynthesis. Cell wall formation. Adds enolpyruvyl to UDP-N-acetylglucosamine. The sequence is that of UDP-N-acetylglucosamine 1-carboxyvinyltransferase from Yersinia pseudotuberculosis serotype O:1b (strain IP 31758).